The primary structure comprises 147 residues: Hemoglobin subunit gamma-1 (147 aa).

The Globin domain occupies 3 to 147 (NFTAEDKAAI…VASALGSRYH (145 aa)). Thr13 bears the Phosphothreonine mark. A phosphoserine mark is found at Ser45, Ser51, and Ser53. Position 60 is an N6-acetyllysine (Lys60). His64 is a binding site for heme b. The residue at position 83 (Lys83) is an N6-acetyllysine. Residue His93 participates in heme b binding. Residue Cys94 is modified to S-nitrosocysteine. Position 140 is a phosphoserine (Ser140).

The protein belongs to the globin family. In terms of assembly, heterotetramer of two alpha chains and two gamma chains in fetal hemoglobin (Hb F). In terms of tissue distribution, red blood cells.

In terms of biological role, gamma chains make up the fetal hemoglobin F, in combination with alpha chains. The polypeptide is Hemoglobin subunit gamma-1 (HBG1) (Plecturocebus moloch (Dusky titi monkey)).